A 946-amino-acid polypeptide reads, in one-letter code: Protein translocase subunit SecA (946 aa).

Residues Gln87, 105-109 (GEGKT), and Asp524 each bind ATP. 2 disordered regions span residues 872–892 (PEQP…NTGE) and 904–946 (PADT…GRYA). Residues 907–917 (TVEKSERDPNR) are compositionally biased toward basic and acidic residues. Zn(2+) is bound by residues Cys930, Cys932, Cys941, and His942. Residues 936 to 946 (KKYKHCHGRYA) are compositionally biased toward basic residues.

The protein belongs to the SecA family. Monomer and homodimer. Part of the essential Sec protein translocation apparatus which comprises SecA, SecYEG and auxiliary proteins SecDF-YajC and YidC. The cofactor is Zn(2+).

It is found in the cell inner membrane. Its subcellular location is the cytoplasm. It catalyses the reaction ATP + H2O + cellular proteinSide 1 = ADP + phosphate + cellular proteinSide 2.. Its function is as follows. Part of the Sec protein translocase complex. Interacts with the SecYEG preprotein conducting channel. Has a central role in coupling the hydrolysis of ATP to the transfer of proteins into and across the cell membrane, serving both as a receptor for the preprotein-SecB complex and as an ATP-driven molecular motor driving the stepwise translocation of polypeptide chains across the membrane. This Rhodopseudomonas palustris (strain BisB5) protein is Protein translocase subunit SecA.